Reading from the N-terminus, the 350-residue chain is Transmembrane protein 185A (350 aa).

The next 7 membrane-spanning stretches (helical) occupy residues L16–I36, W41–G61, F81–V101, F111–V131, I177–L197, I211–L231, and A240–T260. Residues D298–D350 form a mediates interaction with MAP1B region.

This sequence belongs to the TMEM185 family. Interacts with MAP1B.

The protein resides in the cell projection. Its subcellular location is the dendrite. The protein localises to the membrane. This chain is Transmembrane protein 185A (TMEM185A), found in Pongo abelii (Sumatran orangutan).